A 347-amino-acid chain; its full sequence is Protein N-terminal asparagine amidohydrolase (347 aa).

The catalysed reaction is N-terminal L-asparaginyl-[protein] + H2O + H(+) = N-terminal L-aspartyl-[protein] + NH4(+). In terms of biological role, N-terminal asparagine deamidase that mediates deamidation of N-terminal asparagine residues to aspartate. Required for the ubiquitin-dependent turnover of intracellular proteins that initiate with Met-Asn. These proteins are acetylated on the retained initiator methionine and can subsequently be modified by the removal of N-acetyl methionine by acylaminoacid hydrolase (AAH). Conversion of the resulting N-terminal asparagine to aspartate by NTAN1 renders the protein susceptible to arginylation, polyubiquitination and degradation as specified by the N-end rule. This enzyme does not act on substrates with internal or C-terminal asparagines and does not act on glutamine residues in any position. Does not seem to be involved in immune response, unlike the N-terminal glutamine amidohydrolase NTAQ1. This Arabidopsis thaliana (Mouse-ear cress) protein is Protein N-terminal asparagine amidohydrolase.